The sequence spans 88 residues: N(2)-fixation sustaining protein CowN (88 aa).

Belongs to the CowN family.

In terms of biological role, is required to sustain N(2)-dependent growth in the presence of low levels of carbon monoxide (CO). Probably acts by protecting the N(2) fixation ability of the nitrogenase complex, which is inactivated in the presence of CO. In Rhodomicrobium vannielii (strain ATCC 17100 / DSM 162 / LMG 4299 / NCIMB 10020 / ATH 3.1.1), this protein is N(2)-fixation sustaining protein CowN.